Consider the following 122-residue polypeptide: Structural protein p14.5 (122 aa).

Disordered stretches follow at residues 1–27 (MADF…LEYD) and 73–122 (EDNN…HKSK). Ala-2 carries the post-translational modification N-acetylalanine; by host. Over residues 105–122 (KPKKKKHLFPKLSSHKSK) the composition is skewed to basic residues.

The protein belongs to the asfivirus structural protein p14.5 family. In terms of assembly, interacts with the major capsid protein. Interacts with host IRF3; this interaction interferes with the recruitment of IRF3 to TBK1. Acetylated.

Its subcellular location is the virion. Functionally, structural protein required for transport of intracellular particles from the assembly sites to the plasma membrane. Binds to both ssDNA and dsDNA. Suppressed the activation of the cGAS/STING pathway by interfering with the recruitment of IRF3 to TBK1, which in turn suppresses IRF3 phosphorylation, decreasing interferon production. This is Structural protein p14.5 from African swine fever virus (isolate Warthog/Namibia/Wart80/1980) (ASFV).